Here is a 484-residue protein sequence, read N- to C-terminus: Putative sodium/proton-dependent alanine carrier protein YrbD (484 aa).

11 helical membrane passes run 11 to 31 (VLWSTPVIYILLGIGFAFSIM), 66 to 88 (ALSGRVGTGNIAGVATAIAFGGP), 92 to 114 (FWMWAIAFIGAASAFVESTLAQI), 139 to 159 (WFAVLFAAAALIAMAFLMPGV), 172 to 192 (FGISPFVTGCGLVLLLGFIIF), 205 to 225 (IVPFMAIGYILLSLIIIVMNV), 238 to 258 (SAFALDSAFGGLIGMAISWGV), 292 to 312 (AFSVYIDTLFVCSATAFMILF), 350 to 370 (GFGAGFVAIALFFFAFTTIMA), 390 to 410 (WAMLGLKLIILAATFYGTVKT), and 416 to 436 (ALGDAGLGIMVWLNVIAIVLL).

The protein belongs to the alanine or glycine:cation symporter (AGCS) (TC 2.A.25) family.

Its subcellular location is the cell membrane. The sequence is that of Putative sodium/proton-dependent alanine carrier protein YrbD (yrbD) from Bacillus subtilis (strain 168).